A 448-amino-acid polypeptide reads, in one-letter code: Phosphoglucosamine mutase (448 aa).

Ser-101 serves as the catalytic Phosphoserine intermediate. Mg(2+) contacts are provided by Ser-101, Asp-241, Asp-243, and Asp-245. Ser-101 bears the Phosphoserine mark.

It belongs to the phosphohexose mutase family. Mg(2+) serves as cofactor. Post-translationally, activated by phosphorylation.

The enzyme catalyses alpha-D-glucosamine 1-phosphate = D-glucosamine 6-phosphate. Functionally, catalyzes the conversion of glucosamine-6-phosphate to glucosamine-1-phosphate. This Macrococcus caseolyticus (strain JCSC5402) (Macrococcoides caseolyticum) protein is Phosphoglucosamine mutase.